The sequence spans 245 residues: tRNA (guanine-N(1)-)-methyltransferase (245 aa).

S-adenosyl-L-methionine contacts are provided by residues Gly112 and 132-137 (IGDFVL).

It belongs to the RNA methyltransferase TrmD family. As to quaternary structure, homodimer.

The protein resides in the cytoplasm. The enzyme catalyses guanosine(37) in tRNA + S-adenosyl-L-methionine = N(1)-methylguanosine(37) in tRNA + S-adenosyl-L-homocysteine + H(+). Specifically methylates guanosine-37 in various tRNAs. The chain is tRNA (guanine-N(1)-)-methyltransferase from Geobacter metallireducens (strain ATCC 53774 / DSM 7210 / GS-15).